The sequence spans 431 residues: Adenylosuccinate synthetase (431 aa).

GTP contacts are provided by residues 13–19 and 41–43; these read GDEGKGK and GHT. The Proton acceptor role is filled by aspartate 14. The Mg(2+) site is built by aspartate 14 and glycine 41. IMP-binding positions include 14–17, 39–42, threonine 130, arginine 144, glutamine 225, threonine 240, and arginine 304; these read DEGK and NAGH. The active-site Proton donor is histidine 42. 300 to 306 contacts substrate; it reads ATTGRQR. GTP-binding positions include arginine 306, 332-334, and 414-416; these read KLD and STG.

Belongs to the adenylosuccinate synthetase family. Homodimer. Mg(2+) serves as cofactor.

It is found in the cytoplasm. It carries out the reaction IMP + L-aspartate + GTP = N(6)-(1,2-dicarboxyethyl)-AMP + GDP + phosphate + 2 H(+). It functions in the pathway purine metabolism; AMP biosynthesis via de novo pathway; AMP from IMP: step 1/2. Functionally, plays an important role in the de novo pathway of purine nucleotide biosynthesis. Catalyzes the first committed step in the biosynthesis of AMP from IMP. The polypeptide is Adenylosuccinate synthetase (Saccharophagus degradans (strain 2-40 / ATCC 43961 / DSM 17024)).